The following is a 1823-amino-acid chain: Laminin subunit alpha-4 (1823 aa).

The N-terminal stretch at 1 to 24 (MALSSAWRSVLPLWLLWSAACSRA) is a signal peptide. O-linked (Xyl...) (chondroitin sulfate) serine glycosylation is present at Ser-39. 12 disulfide bridges follow: Cys-82–Cys-91, Cys-84–Cys-98, Cys-101–Cys-110, Cys-113–Cys-129, Cys-132–Cys-146, Cys-134–Cys-155, Cys-157–Cys-166, Cys-169–Cys-184, Cys-187–Cys-202, Cys-189–Cys-209, Cys-212–Cys-221, and Cys-224–Cys-238. Laminin EGF-like domains lie at 82-131 (CDCN…FCQP), 132-186 (CPCP…TCKK), and 187-240 (CDCS…NCAV). N-linked (GlcNAc...) asparagine glycosylation occurs at Asn-104. Residue Asn-215 is glycosylated (N-linked (GlcNAc...) asparagine). The Laminin EGF-like 4; truncated domain maps to 241-255 (CNCGGGPCDSVTGEC). Residues 256–832 (LEEGFEPPTG…AQTRSVASKI (577 aa)) form a domain II and I region. Asn-315 carries N-linked (GlcNAc...) asparagine glycosylation. A coiled-coil region spans residues 320–403 (LLKTKLSERE…KIQEINNKML (84 aa)). Asn-465 is a glycosylation site (N-linked (GlcNAc...) asparagine). Residues 473 to 528 (VVLEQLDDYNAKLSDLQEALDQALNYVRDAEDMNRATAARQRDHEKQQERVREQME) adopt a coiled-coil conformation. N-linked (GlcNAc...) asparagine glycans are attached at residues Asn-531, Asn-557, Asn-578, Asn-581, Asn-638, and Asn-646. A coiled-coil region spans residues 581-614 (NLSHDLVQEAIDHAQDLQQEANELSRKLHSSDMN). Positions 662-724 (IIYHKDESEN…AVKQLQAAER (63 aa)) form a coiled coil. Residues 724–726 (RGD) carry the Cell attachment site motif. 5 N-linked (GlcNAc...) asparagine glycosylation sites follow: Asn-742, Asn-758, Asn-761, Asn-787, and Asn-810. Residues 777 to 806 (AVNSARDAVRNLTEVVPQLLDQLRTVEQKR) are a coiled coil. 3 consecutive Laminin G-like domains span residues 833 to 1035 (QVSM…SVPC), 1047 to 1227 (AASY…GYGC), and 1234 to 1402 (SRRA…LYEC). An intrachain disulfide couples Cys-1005 to Cys-1035. Asn-1093 carries an N-linked (GlcNAc...) asparagine glycan. Cys-1201 and Cys-1227 are disulfide-bonded. N-linked (GlcNAc...) asparagine glycosylation is found at Asn-1288 and Asn-1366. Cys-1370 and Cys-1402 form a disulfide bridge. N-linked (GlcNAc...) asparagine glycosylation is present at Asn-1418. Residues 1419–1440 (LSKPKASQNKKGGKSKDAPSWD) are disordered. Laminin G-like domains follow at residues 1469–1640 (AYQY…VTPC) and 1647–1820 (TGTY…INSC). Disulfide bonds link Cys-1617-Cys-1640 and Cys-1792-Cys-1820.

In terms of assembly, laminin is a complex glycoprotein, consisting of three different polypeptide chains (alpha, beta, gamma), which are bound to each other by disulfide bonds into a cross-shaped molecule comprising one long and three short arms with globules at each end. Alpha-4 is a subunit of laminin-8 (laminin-411), laminin-9 (laminin-421) and laminin-14 (laminin-423). In terms of tissue distribution, detected in placenta (at protein level). Detected in fibroblasts and urine (at protein level). In adult, strong expression in heart, lung, ovary small and large intestines, placenta, liver; weak or no expression in skeletal muscle, kidney, pancreas, testis, prostate, brain. High expression in fetal lung and kidney. Expression in fetal and newborn tissues is observed in certain mesenchymal cells in tissues such as smooth muscle and dermis.

It is found in the secreted. It localises to the extracellular space. The protein localises to the extracellular matrix. The protein resides in the basement membrane. Binding to cells via a high affinity receptor, laminin is thought to mediate the attachment, migration and organization of cells into tissues during embryonic development by interacting with other extracellular matrix components. The polypeptide is Laminin subunit alpha-4 (LAMA4) (Homo sapiens (Human)).